The chain runs to 309 residues: Taste receptor type 2 member 31 (309 aa).

Topologically, residues 1–2 (MT) are extracellular. Residues 3–23 (TFIPIIFSSVVVVLFVIGNFA) form a helical membrane-spanning segment. Over 24 to 55 (NGFIALVNSIERVKRQKISFADQILTALAVSR) the chain is Cytoplasmic. A helical membrane pass occupies residues 56–76 (VGLLWVLLLNWYSTVFNPAFY). Topologically, residues 77–100 (SVEVRTTAYNVWAVTGHFSNWLAT) are extracellular. A helical membrane pass occupies residues 101–121 (SLSIFYLLKIANFSNLIFLHL). The Cytoplasmic segment spans residues 122-126 (KRRVK). Residues 127 to 147 (SVILVMLLGPLLFLACQLFVI) traverse the membrane as a helical segment. At 148-181 (NMKEIVRTKEYEGNLTWKIKLRSAVYLSDATVTT) the chain is on the extracellular side. Asn161 carries an N-linked (GlcNAc...) asparagine glycan. The helical transmembrane segment at 182 to 202 (LGNLVPFTLTLLCFLLLICSL) threads the bilayer. Residues 203 to 229 (CKHLKKMQLHGKGSQDPSTKVHIKALQ) lie on the Cytoplasmic side of the membrane. The helical transmembrane segment at 230-250 (TVIFFLLLCAVYFLSIMISVW) threads the bilayer. At 251–259 (SFGSLENKP) the chain is on the extracellular side. A helical transmembrane segment spans residues 260–280 (VFMFCKAIRFSYPSIHPFILI). Residues 281 to 309 (WGNKKLKQTFLSVLRQVRYWVKGEKPSSP) lie on the Cytoplasmic side of the membrane.

This sequence belongs to the G-protein coupled receptor T2R family. In terms of tissue distribution, expressed in subsets of taste receptor cells of the tongue and exclusively in gustducin-positive cells.

It localises to the membrane. In terms of biological role, receptor that may play a role in the perception of bitterness and is gustducin-linked. May play a role in sensing the chemical composition of the gastrointestinal content. The activity of this receptor may stimulate alpha gustducin, mediate PLC-beta-2 activation and lead to the gating of TRPM5. Activated by the sulfonyl amide sweeteners saccharin and acesulfame K. In Homo sapiens (Human), this protein is Taste receptor type 2 member 31 (TAS2R31).